Here is a 270-residue protein sequence, read N- to C-terminus: Tryptophan synthase alpha chain (270 aa).

Active-site proton acceptor residues include glutamate 49 and aspartate 60.

This sequence belongs to the TrpA family. In terms of assembly, tetramer of two alpha and two beta chains.

The catalysed reaction is (1S,2R)-1-C-(indol-3-yl)glycerol 3-phosphate + L-serine = D-glyceraldehyde 3-phosphate + L-tryptophan + H2O. Its pathway is amino-acid biosynthesis; L-tryptophan biosynthesis; L-tryptophan from chorismate: step 5/5. Functionally, the alpha subunit is responsible for the aldol cleavage of indoleglycerol phosphate to indole and glyceraldehyde 3-phosphate. In Buchnera aphidicola subsp. Diuraphis noxia, this protein is Tryptophan synthase alpha chain.